A 381-amino-acid polypeptide reads, in one-letter code: UDP-N-acetylglucosamine--N-acetylmuramyl-(pentapeptide) pyrophosphoryl-undecaprenol N-acetylglucosamine transferase (381 aa).

UDP-N-acetyl-alpha-D-glucosamine is bound by residues 10-12 (TGG), Asn-124, Arg-165, Ser-207, Ile-263, and Gln-308.

Belongs to the glycosyltransferase 28 family. MurG subfamily.

Its subcellular location is the cell inner membrane. The catalysed reaction is di-trans,octa-cis-undecaprenyl diphospho-N-acetyl-alpha-D-muramoyl-L-alanyl-D-glutamyl-meso-2,6-diaminopimeloyl-D-alanyl-D-alanine + UDP-N-acetyl-alpha-D-glucosamine = di-trans,octa-cis-undecaprenyl diphospho-[N-acetyl-alpha-D-glucosaminyl-(1-&gt;4)]-N-acetyl-alpha-D-muramoyl-L-alanyl-D-glutamyl-meso-2,6-diaminopimeloyl-D-alanyl-D-alanine + UDP + H(+). The protein operates within cell wall biogenesis; peptidoglycan biosynthesis. In terms of biological role, cell wall formation. Catalyzes the transfer of a GlcNAc subunit on undecaprenyl-pyrophosphoryl-MurNAc-pentapeptide (lipid intermediate I) to form undecaprenyl-pyrophosphoryl-MurNAc-(pentapeptide)GlcNAc (lipid intermediate II). The polypeptide is UDP-N-acetylglucosamine--N-acetylmuramyl-(pentapeptide) pyrophosphoryl-undecaprenol N-acetylglucosamine transferase (Trichlorobacter lovleyi (strain ATCC BAA-1151 / DSM 17278 / SZ) (Geobacter lovleyi)).